Here is a 443-residue protein sequence, read N- to C-terminus: Histidine--tRNA ligase (443 aa).

A compositionally biased stretch (basic and acidic residues) spans 1-20 (MTESEKKQQKPQKAKAEKFK). The segment at 1 to 21 (MTESEKKQQKPQKAKAEKFKA) is disordered.

This sequence belongs to the class-II aminoacyl-tRNA synthetase family. In terms of assembly, homodimer.

The protein resides in the cytoplasm. It catalyses the reaction tRNA(His) + L-histidine + ATP = L-histidyl-tRNA(His) + AMP + diphosphate + H(+). This chain is Histidine--tRNA ligase, found in Corynebacterium jeikeium (strain K411).